A 292-amino-acid polypeptide reads, in one-letter code: Putative two-component response regulator-like APRR4 (292 aa).

Positions 43–158 (RVLVFDEDPS…DLRIVFKHLV (116 aa)) constitute a Response regulatory domain. Residues 168-215 (VTGEAEKAAGEKSSSVGDSTIRNPNKSKRSSCLEAEVNEEDRHDHNDR) form a disordered region. Over residues 179–191 (KSSSVGDSTIRNP) the composition is skewed to polar residues. The myb-like GARP DNA-binding region spans 225–275 (RVVWDEELHQNFLNAVDFLGLERAVPKKILDVMKVDYISRENVASHLQVTF).

The protein belongs to the ARR-like family. As to quaternary structure, binds the target DNA as a monomer.

It is found in the nucleus. Transcriptional activator that binds specifically to the DNA sequence 5'-[AG]GATT-3'. The chain is Putative two-component response regulator-like APRR4 (APRR4) from Arabidopsis thaliana (Mouse-ear cress).